The following is a 264-amino-acid chain: Glucosamine-6-phosphate deaminase (264 aa).

Asp67 serves as the catalytic Proton acceptor; for enolization step. Asn136 (for ring-opening step) is an active-site residue. Catalysis depends on His138, which acts as the Proton acceptor; for ring-opening step. Glu143 acts as the For ring-opening step in catalysis.

Belongs to the glucosamine/galactosamine-6-phosphate isomerase family. NagB subfamily. Homohexamer.

The enzyme catalyses alpha-D-glucosamine 6-phosphate + H2O = beta-D-fructose 6-phosphate + NH4(+). The protein operates within amino-sugar metabolism; N-acetylneuraminate degradation; D-fructose 6-phosphate from N-acetylneuraminate: step 5/5. Catalyzes the reversible isomerization-deamination of glucosamine 6-phosphate (GlcN6P) to form fructose 6-phosphate (Fru6P) and ammonium ion. The sequence is that of Glucosamine-6-phosphate deaminase from Shewanella woodyi (strain ATCC 51908 / MS32).